Reading from the N-terminus, the 118-residue chain is Ribosome-binding factor A (118 aa).

Belongs to the RbfA family. In terms of assembly, monomer. Binds 30S ribosomal subunits, but not 50S ribosomal subunits or 70S ribosomes.

The protein resides in the cytoplasm. One of several proteins that assist in the late maturation steps of the functional core of the 30S ribosomal subunit. Associates with free 30S ribosomal subunits (but not with 30S subunits that are part of 70S ribosomes or polysomes). Required for efficient processing of 16S rRNA. May interact with the 5'-terminal helix region of 16S rRNA. The sequence is that of Ribosome-binding factor A from Thermodesulfovibrio yellowstonii (strain ATCC 51303 / DSM 11347 / YP87).